The following is a 92-amino-acid chain: YcgL domain-containing protein ASA_2166 (92 aa).

The 85-residue stretch at 1–85 (MLCAVYKSRK…PPENLLEQHK (85 aa)) folds into the YcgL domain.

The polypeptide is YcgL domain-containing protein ASA_2166 (Aeromonas salmonicida (strain A449)).